Here is a 71-residue protein sequence, read N- to C-terminus: Small ribosomal subunit protein bS21 (71 aa).

The segment at 38 to 71 (YEKPTTERKRARASAIKRHAKKLARENARRTRLY) is disordered. Residues 46-59 (KRARASAIKRHAKK) show a composition bias toward basic residues. The segment covering 60–71 (LARENARRTRLY) has biased composition (basic and acidic residues).

This sequence belongs to the bacterial ribosomal protein bS21 family.

In Hamiltonella defensa subsp. Acyrthosiphon pisum (strain 5AT), this protein is Small ribosomal subunit protein bS21.